Here is a 404-residue protein sequence, read N- to C-terminus: 2,3-bisphosphoglycerate-independent phosphoglycerate mutase (404 aa).

The interval 155–183 is disordered; it reads LSDMIGDSDPHREGLPPEKIRPTDPSGDR. Residues 162 to 183 show a composition bias toward basic and acidic residues; sequence SDPHREGLPPEKIRPTDPSGDR.

It belongs to the BPG-independent phosphoglycerate mutase family. A-PGAM subfamily.

The catalysed reaction is (2R)-2-phosphoglycerate = (2R)-3-phosphoglycerate. The protein operates within carbohydrate degradation; glycolysis; pyruvate from D-glyceraldehyde 3-phosphate: step 3/5. Catalyzes the interconversion of 2-phosphoglycerate and 3-phosphoglycerate. In Thermoplasma acidophilum (strain ATCC 25905 / DSM 1728 / JCM 9062 / NBRC 15155 / AMRC-C165), this protein is 2,3-bisphosphoglycerate-independent phosphoglycerate mutase.